A 507-amino-acid chain; its full sequence is Inactive alanine aminotransferase (507 aa).

Pyridoxal 5'-phosphate-binding residues include alanine 173, serine 174, tyrosine 199, asparagine 255, and serine 324. Position 327 is an N6-(pyridoxal phosphate)lysine (lysine 327). Position 336 (arginine 336) interacts with pyridoxal 5'-phosphate.

This sequence belongs to the class-I pyridoxal-phosphate-dependent aminotransferase family. Alanine aminotransferase subfamily. In terms of assembly, homodimer. Pyridoxal 5'-phosphate is required as a cofactor.

The protein localises to the cytoplasm. Its subcellular location is the nucleus. Functionally, inactive alanine aminotransferase. Forms a catalytically active Schiff base with PLP, but lacks alanine transaminase activity, probably due to an altered structural conformation of the dimeric enzyme. This suggests this protein may have a yet undiscovered physiological function. The sequence is that of Inactive alanine aminotransferase (ALT2) from Saccharomyces cerevisiae (strain ATCC 204508 / S288c) (Baker's yeast).